The chain runs to 134 residues: Putative capsid protein (134 aa).

As to quaternary structure, homodimer.

It is found in the virion. In terms of biological role, self-assembles to form a helical, filamentous nucleocapsid. The capsid proteins wrap around the DNA and maintain it in an A-form by non-specific desolvation and specific coordination of the DNA phosphate groups by positively charged residues. This certainly protects the viral DNA under conditions such as the extreme desiccation of its host. In Sulfolobus islandicus rod-shaped virus 1 (SIRV-1), this protein is Putative capsid protein.